Here is a 1242-residue protein sequence, read N- to C-terminus: DNA-directed RNA polymerase RPB2 homolog (1242 aa).

A C4-type zinc finger spans residues 1180–1201 (CRNCGEPAIYNASHPIYKCMNC).

The protein belongs to the RNA polymerase beta chain family. Part of the viral DNA-directed RNA polymerase that consists of 8 polII-like subunits (RPB1, RPB2, RPB3, RPB5, RPB6, RPB7, RPB9, RPB10), a capping enzyme and a termination factor.

It is found in the host cytoplasm. The protein localises to the virion. The enzyme catalyses RNA(n) + a ribonucleoside 5'-triphosphate = RNA(n+1) + diphosphate. Functionally, catalytic component of the DNA-directed RNA polymerase (RNAP) that catalyzes the transcription in the cytoplasm of viral DNA into RNA using the four ribonucleoside triphosphates as substrates. Forms the polymerase active center together with RPB1. Part of the core element with the central large cleft, the clamp element that moves to open and close the cleft and the jaws that are thought to grab the incoming DNA template. The chain is DNA-directed RNA polymerase RPB2 homolog from African swine fever virus (isolate Tick/Malawi/Lil 20-1/1983) (ASFV).